A 240-amino-acid chain; its full sequence is Dihydromonapterin reductase (240 aa).

The active-site Proton acceptor is Tyr-152.

This sequence belongs to the short-chain dehydrogenases/reductases (SDR) family. FolM subfamily.

The catalysed reaction is (6S)-5,6,7,8-tetrahydrofolate + NADP(+) = 7,8-dihydrofolate + NADPH + H(+). It carries out the reaction 7,8-dihydromonapterin + NADPH + H(+) = 5,6,7,8-tetrahydromonapterin + NADP(+). Its function is as follows. Catalyzes the reduction of dihydromonapterin to tetrahydromonapterin. Also has lower activity with dihydrofolate. The polypeptide is Dihydromonapterin reductase (folM) (Escherichia coli O139:H28 (strain E24377A / ETEC)).